The following is a 452-amino-acid chain: tRNA modification GTPase MnmE (452 aa).

The (6S)-5-formyl-5,6,7,8-tetrahydrofolate site is built by arginine 24, glutamate 81, and arginine 120. Positions 216-373 (GIKTVIVGAP…LFGAIGRWAD (158 aa)) constitute a TrmE-type G domain. GTP contacts are provided by residues 226–231 (NVGKSS), 245–251 (SAEPGTT), and 270–273 (DTAG). Residues serine 230 and threonine 251 each coordinate Mg(2+). Lysine 452 is a binding site for (6S)-5-formyl-5,6,7,8-tetrahydrofolate.

The protein belongs to the TRAFAC class TrmE-Era-EngA-EngB-Septin-like GTPase superfamily. TrmE GTPase family. As to quaternary structure, homodimer. Heterotetramer of two MnmE and two MnmG subunits. K(+) is required as a cofactor.

Its subcellular location is the cytoplasm. Its function is as follows. Exhibits a very high intrinsic GTPase hydrolysis rate. Involved in the addition of a carboxymethylaminomethyl (cmnm) group at the wobble position (U34) of certain tRNAs, forming tRNA-cmnm(5)s(2)U34. The chain is tRNA modification GTPase MnmE from Opitutus terrae (strain DSM 11246 / JCM 15787 / PB90-1).